The following is a 172-amino-acid chain: 3-hydroxydecanoyl-[acyl-carrier-protein] dehydratase (172 aa).

His-71 is a catalytic residue.

It belongs to the thioester dehydratase family. FabA subfamily. In terms of assembly, homodimer.

It localises to the cytoplasm. It carries out the reaction a (3R)-hydroxyacyl-[ACP] = a (2E)-enoyl-[ACP] + H2O. The enzyme catalyses (3R)-hydroxydecanoyl-[ACP] = (2E)-decenoyl-[ACP] + H2O. The catalysed reaction is (2E)-decenoyl-[ACP] = (3Z)-decenoyl-[ACP]. It participates in lipid metabolism; fatty acid biosynthesis. Necessary for the introduction of cis unsaturation into fatty acids. Catalyzes the dehydration of (3R)-3-hydroxydecanoyl-ACP to E-(2)-decenoyl-ACP and then its isomerization to Z-(3)-decenoyl-ACP. Can catalyze the dehydratase reaction for beta-hydroxyacyl-ACPs with saturated chain lengths up to 16:0, being most active on intermediate chain length. This Brucella anthropi (strain ATCC 49188 / DSM 6882 / CCUG 24695 / JCM 21032 / LMG 3331 / NBRC 15819 / NCTC 12168 / Alc 37) (Ochrobactrum anthropi) protein is 3-hydroxydecanoyl-[acyl-carrier-protein] dehydratase.